A 792-amino-acid chain; its full sequence is Cadherin-11 (792 aa).

Positions 1–22 (MKEDNCLHAALICLGMLYYSHA) are cleaved as a signal peptide. Positions 23 to 53 (ITTEKLNHVRPSLHGHHEKGKEGQVLHRSKR) are excised as a propeptide. 5 Cadherin domains span residues 54-159 (GWVW…PPEF), 160-268 (LHEN…PPKF), 269-383 (PQSV…PPVF), 384-486 (LKPS…DNAP), and 487-608 (KFAA…YILN). Residues 54-613 (GWVWNQFFVI…AYILNAGLST (560 aa)) are Extracellular-facing. N-linked (GlcNAc...) asparagine glycosylation is found at N455, N536, and N594. A helical membrane pass occupies residues 614–634 (GALIAILACIVILLVIVVLFV). The Cytoplasmic portion of the chain corresponds to 635 to 792 (TLKRQKKEPL…GSKDTFDDDS (158 aa)).

The protein resides in the cell membrane. Cadherins are calcium-dependent cell adhesion proteins. They preferentially interact with themselves in a homophilic manner in connecting cells; cadherins may thus contribute to the sorting of heterogeneous cell types. Required for proper focal adhesion assembly. Involved in the regulation of cell migration. This chain is Cadherin-11 (CDH11), found in Gallus gallus (Chicken).